A 118-amino-acid polypeptide reads, in one-letter code: Holo-[acyl-carrier-protein] synthase (118 aa).

Residues Asp-8 and Glu-60 each coordinate Mg(2+).

It belongs to the P-Pant transferase superfamily. AcpS family. Requires Mg(2+) as cofactor.

It is found in the cytoplasm. The enzyme catalyses apo-[ACP] + CoA = holo-[ACP] + adenosine 3',5'-bisphosphate + H(+). Transfers the 4'-phosphopantetheine moiety from coenzyme A to a Ser of acyl-carrier-protein. The sequence is that of Holo-[acyl-carrier-protein] synthase from Wolbachia sp. subsp. Drosophila simulans (strain wRi).